Reading from the N-terminus, the 555-residue chain is MSEAEARPTNFIRQIIDEDLASGKHTTVHTRFPPEPNGYLHIGHAKSICLNFGIAQDYQGQCNLRFDDTNPVKEDIEYVDSIKNDVEWLGFHWSGDIRYSSDYFDQLHAYAVELINKGLAYVDELTPEQIREYRGTLTAPGKNSPFRDRSVEENLALFEKMRTGGFEEGKACLRAKIDMASPFIVMRDPVLYRIKFAEHHQTGNKWCIYPMYDFTHCISDALEGITHSLCTLEFQDNRRLYDWVLDNITIPVHPRQYEFSRLNLEYTVMSKRKLNLLVTDKHVEGWDDPRMPTISGLRRRGYTAASIREFCKRIGVTKQDNTIEMASLESCIREDLNENAPRAMAVIDPVKLVIENYPQGESEMVTMPNHPNKLEMGSREVPFSGEIWIDRADFREEANKQYKRLVMGKEVRLRNAYVIKAERVEKDAEGNITTIFCTYDADTLSKDPADGRKVKGVIHWVSAAHALPIEIRLYDRLFSVPNPGAAEDFLSVINPESLVIKQGYGEPSLKAAVAGKAFQFEREGYFCLDSRYATADKLVFNRTVGLRDTWAKAGE.

Residues Pro34–His44 carry the 'HIGH' region motif. ATP contacts are provided by residues Glu35 to Asn37 and His41 to Ser47. 2 residues coordinate L-glutamine: Asp67 and Tyr212. ATP-binding positions include Thr231, Arg261 to Leu262, and Met269 to Lys271. Residues Val268–Arg272 carry the 'KMSKS' region motif. An interaction with tRNA region spans residues Thr317–Glu324.

It belongs to the class-I aminoacyl-tRNA synthetase family. As to quaternary structure, monomer.

It localises to the cytoplasm. The enzyme catalyses tRNA(Gln) + L-glutamine + ATP = L-glutaminyl-tRNA(Gln) + AMP + diphosphate. This Salmonella paratyphi B (strain ATCC BAA-1250 / SPB7) protein is Glutamine--tRNA ligase.